The chain runs to 216 residues: MRVAIIDYGSGNLRSATKAFERAAHESGISAEIDLTCDAQRVASADRIVLPGVGAYADCRRGLDAVPGMVEALNDTVLKKARPFLGICVGMQLMSERGLEKTVTNGLGWIAGDVREMVPSDASLKIPQIGWNRIHVKHSHPIFDGIPAGDDGLHAYFVHSYMLDAKNASDVLAVTDYGGDVTAAVGRDNMVGTQFHPEKSQLLGLSLIANFLKWKP.

Positions 2-216 (RVAIIDYGSG…LIANFLKWKP (215 aa)) constitute a Glutamine amidotransferase type-1 domain. Cys-88 functions as the Nucleophile in the catalytic mechanism. Catalysis depends on residues His-196 and Glu-198.

Heterodimer of HisH and HisF.

Its subcellular location is the cytoplasm. It carries out the reaction 5-[(5-phospho-1-deoxy-D-ribulos-1-ylimino)methylamino]-1-(5-phospho-beta-D-ribosyl)imidazole-4-carboxamide + L-glutamine = D-erythro-1-(imidazol-4-yl)glycerol 3-phosphate + 5-amino-1-(5-phospho-beta-D-ribosyl)imidazole-4-carboxamide + L-glutamate + H(+). The catalysed reaction is L-glutamine + H2O = L-glutamate + NH4(+). It participates in amino-acid biosynthesis; L-histidine biosynthesis; L-histidine from 5-phospho-alpha-D-ribose 1-diphosphate: step 5/9. Functionally, IGPS catalyzes the conversion of PRFAR and glutamine to IGP, AICAR and glutamate. The HisH subunit catalyzes the hydrolysis of glutamine to glutamate and ammonia as part of the synthesis of IGP and AICAR. The resulting ammonia molecule is channeled to the active site of HisF. The protein is Imidazole glycerol phosphate synthase subunit HisH of Brucella suis biovar 1 (strain 1330).